Here is a 754-residue protein sequence, read N- to C-terminus: Protein NUCLEOLAR FACTOR 1 (754 aa).

Disordered stretches follow at residues 1 to 56 (MAPN…EAMV), 69 to 166 (SLGS…ELST), and 390 to 413 (EDTD…QKSS). Acidic residues predominate over residues 42 to 52 (SPEESSIEAES). Positions 80–93 (MNKRRQREEEGKSD) are enriched in basic and acidic residues. Composition is skewed to acidic residues over residues 94–110 (TEED…ENSG) and 138–161 (DTQE…DEEV). Residues 402–413 (SKNGNSIKQKSS) show a composition bias toward polar residues.

It belongs to the UTP25 family. As to quaternary structure, component of the ribosomal small subunit (SSU) processome composed of at least 40 protein subunits and snoRNA U3. Interacts with THAL in the nucleus. Preferentially expressed in differentiating cells in young tissues such as floral buds, ovules, embryos, secondary roots, pollen, young seedlings and vascular bundles. Observed ubiquitously.

Its subcellular location is the nucleus. The protein localises to the nucleolus. Functionally, DEAD-box RNA helicase-like protein required for pre-18S rRNA processing, specifically at sites A0, A1, and A2. Involved in the control of rRNA expression. Required for embryo development and female gametogenesis. The protein is Protein NUCLEOLAR FACTOR 1 of Arabidopsis thaliana (Mouse-ear cress).